The chain runs to 84 residues: Large ribosomal subunit protein bL28 (84 aa).

The protein belongs to the bacterial ribosomal protein bL28 family.

The chain is Large ribosomal subunit protein bL28 from Clostridium perfringens (strain 13 / Type A).